The primary structure comprises 440 residues: Stromal membrane-associated protein 1 (440 aa).

Positions 18–143 constitute an Arf-GAP domain; the sequence is QLILSKLLRE…IAITNKEKEK (126 aa). A C4-type zinc finger spans residues 33–56; the sequence is CADCEAKGPRWASWNIGVFICIRC. Composition is skewed to basic and acidic residues over residues 140–158 and 165–178; these read EKEKKKDEKKREKEPEKPA and KLPKKEEQQLEPKK. Disordered regions lie at residues 140-211 and 410-440; these read EKEK…PATA and NASAGFGQPPSTTAGWSGSSSGQTLSTQLWK. The Interaction with clathrin heavy chains signature appears at 192–196; the sequence is LLGLD. Over residues 420-440 the composition is skewed to low complexity; it reads STTAGWSGSSSGQTLSTQLWK.

As to quaternary structure, interacts with ARF6. Interacts with clathrin heavy chains via the clathrin box-like motif. In terms of tissue distribution, detected in adult brain, lung, heart, liver, ovary and bone marrow. Detected in stromal cells of the red pulp of adult spleen.

Its subcellular location is the cell membrane. Its function is as follows. GTPase activating protein that acts on ARF6. Plays a role in clathrin-dependent endocytosis. May play a role in erythropoiesis. The polypeptide is Stromal membrane-associated protein 1 (Smap1) (Mus musculus (Mouse)).